Here is a 334-residue protein sequence, read N- to C-terminus: Cathepsin R (334 aa).

The signal sequence occupies residues 1–17 (MAAVVFIAFLYLGVASG). A propeptide spans 18–114 (VPVLDSSLDA…SIMKREAGSI (97 aa)) (activation peptide). 2 cysteine pairs are disulfide-bonded: Cys-136-Cys-179 and Cys-170-Cys-212. Cys-139 is a catalytic residue. An N-linked (GlcNAc...) asparagine glycan is attached at Asn-269. Cys-270 and Cys-323 form a disulfide bridge. Active-site residues include His-277 and Asn-301.

Belongs to the peptidase C1 family. As to expression, placenta.

It is found in the lysosome. The chain is Cathepsin R (Ctsr) from Mus musculus (Mouse).